Consider the following 185-residue polypeptide: Ribosome-recycling factor (185 aa).

This sequence belongs to the RRF family.

It is found in the cytoplasm. Responsible for the release of ribosomes from messenger RNA at the termination of protein biosynthesis. May increase the efficiency of translation by recycling ribosomes from one round of translation to another. The sequence is that of Ribosome-recycling factor from Bacillus anthracis (strain A0248).